A 398-amino-acid chain; its full sequence is Alpha-2,8-sialyltransferase 8F (398 aa).

Over Met-1 to Pro-3 the chain is Cytoplasmic. Residues Gly-4–Trp-24 form a helical; Signal-anchor for type II membrane protein membrane-spanning segment. Over Cys-25–Ala-398 the chain is Lumenal. 4 N-linked (GlcNAc...) asparagine glycosylation sites follow: Asn-66, Asn-93, Asn-151, and Asn-196. Intrachain disulfides connect Cys-186–Cys-335 and Cys-200–Cys-395. Substrate is bound by residues Asn-214, Asn-236 to Ser-238, and Ser-322 to Gly-324. Catalysis depends on His-370, which acts as the Proton donor/acceptor.

Belongs to the glycosyltransferase 29 family.

It localises to the golgi apparatus membrane. The catalysed reaction is a ganglioside GM3 + CMP-N-acetyl-beta-neuraminate = a ganglioside GD3 + CMP + H(+). It catalyses the reaction a ganglioside GM3 (d18:1(4E)) + CMP-N-acetyl-beta-neuraminate = a ganglioside GD3 (d18:1(4E)) + CMP + H(+). It carries out the reaction a ganglioside GD1a (d18:1(4E)) + CMP-N-acetyl-beta-neuraminate = a ganglioside GT1a (d18:1(4E)) + CMP + H(+). The enzyme catalyses a ganglioside GD1a + CMP-N-acetyl-beta-neuraminate = a ganglioside GT1a + CMP + H(+). The catalysed reaction is a ganglioside GM1b (d18:1(4E)) + CMP-N-acetyl-beta-neuraminate = a ganglioside GD1c (d18:1(4E)) + CMP + H(+). It catalyses the reaction a ganglioside GM1b + CMP-N-acetyl-beta-neuraminate = a ganglioside GD1c + CMP + H(+). It carries out the reaction a ganglioside GM4 (d18:1(4E)) + CMP-N-acetyl-beta-neuraminate = an N-acetyl-alpha-neuraminosyl-(2-&gt;8)-N-acetyl-alpha-neuraminosyl-(2-&gt;3)-beta-D-galactosyl-(1&lt;-&gt;1')-N-acylsphing-4-enine + CMP + H(+). The enzyme catalyses N-acetyl-alpha-neuraminosyl-(2-&gt;3)-beta-D-galactosyl-(1&lt;-&gt;1')-ceramide + CMP-N-acetyl-beta-neuraminate = N-acetyl-alpha-neuraminosyl-(2-&gt;8)-N-acetyl-alpha-neuraminosyl-(2-&gt;3)-beta-D-galactosyl-(1&lt;-&gt;1')-ceramide + CMP + H(+). The catalysed reaction is a ganglioside GT1b (d18:1(4E)) + CMP-N-acetyl-beta-neuraminate = a ganglioside GQ1b (d18:1(4E)) + CMP + H(+). It catalyses the reaction a ganglioside GT1b + CMP-N-acetyl-beta-neuraminate = a ganglioside GQ1b + CMP + H(+). It functions in the pathway protein modification; protein glycosylation. Its function is as follows. Alpha-2,8-sialyltransferase that prefers O-glycans to N-glycans or glycolipids as acceptor substrates. The minimal acceptor substrate is the NeuAc-alpha-2,3(6)-Gal sequence at the non-reducing end of their carbohydrate groups. The polypeptide is Alpha-2,8-sialyltransferase 8F (Homo sapiens (Human)).